We begin with the raw amino-acid sequence, 203 residues long: ATP-dependent Clp protease proteolytic subunit (203 aa).

Catalysis depends on serine 107, which acts as the Nucleophile. Residue histidine 132 is part of the active site.

This sequence belongs to the peptidase S14 family. As to quaternary structure, fourteen ClpP subunits assemble into 2 heptameric rings which stack back to back to give a disk-like structure with a central cavity, resembling the structure of eukaryotic proteasomes.

The protein resides in the cytoplasm. The catalysed reaction is Hydrolysis of proteins to small peptides in the presence of ATP and magnesium. alpha-casein is the usual test substrate. In the absence of ATP, only oligopeptides shorter than five residues are hydrolyzed (such as succinyl-Leu-Tyr-|-NHMec, and Leu-Tyr-Leu-|-Tyr-Trp, in which cleavage of the -Tyr-|-Leu- and -Tyr-|-Trp bonds also occurs).. Functionally, cleaves peptides in various proteins in a process that requires ATP hydrolysis. Has a chymotrypsin-like activity. Plays a major role in the degradation of misfolded proteins. The protein is ATP-dependent Clp protease proteolytic subunit of Shewanella halifaxensis (strain HAW-EB4).